A 72-amino-acid chain; its full sequence is MSLEILDQLEEKIKQAVETIQLLQLEVEELKEKNAESQRNIENLQTENEQLKNEHRNWQEHIRSLLGKFDNV.

A coiled-coil region spans residues Met-1 to Asn-71.

This sequence belongs to the ZapB family. Homodimer. The ends of the coiled-coil dimer bind to each other, forming polymers. Interacts with FtsZ.

Its subcellular location is the cytoplasm. Functionally, non-essential, abundant cell division factor that is required for proper Z-ring formation. It is recruited early to the divisome by direct interaction with FtsZ, stimulating Z-ring assembly and thereby promoting cell division earlier in the cell cycle. Its recruitment to the Z-ring requires functional FtsA or ZipA. The protein is Cell division protein ZapB of Haemophilus influenzae (strain 86-028NP).